Consider the following 435-residue polypeptide: Tumor necrosis factor receptor superfamily member 3 (435 aa).

Positions 1–30 are cleaved as a signal peptide; sequence MLLPWATSAPGLAWGPLVLGLFGLLAASQP. Over 31 to 227 the chain is Extracellular; sequence QAVPPYASEN…PPEMSGTMLM (197 aa). N-linked (GlcNAc...) asparagine glycosylation occurs at Asn40. TNFR-Cys repeat units follow at residues 42-81, 82-124, 125-168, and 169-211; these read TCRD…TVCA, TCAE…KTQC, RCQP…NHCV, and PCKA…TTCK. 10 disulfides stabilise this stretch: Cys43–Cys58, Cys59–Cys72, Cys62–Cys80, Cys83–Cys98, Cys101–Cys116, Cys104–Cys124, Cys126–Cys132, Cys139–Cys148, Cys142–Cys167, and Cys170–Cys185. Asn177 carries N-linked (GlcNAc...) asparagine glycosylation. Residues 228-248 traverse the membrane as a helical segment; the sequence is LAVLLPLAFFLLLATVFSCIW. The Cytoplasmic segment spans residues 249 to 435; the sequence is KSHPSLCRKL…GPRNQFITHD (187 aa). A Phosphoserine modification is found at Ser323. Over residues 373-399 the composition is skewed to pro residues; that stretch reads PGPGDLPATPEPPYPIPEEGDPGPPGL. The tract at residues 373 to 435 is disordered; the sequence is PGPGDLPATP…GPRNQFITHD (63 aa). Residues 403 to 417 are compositionally biased toward basic and acidic residues; sequence HQEDGKAWHLAETEH. A compositionally biased stretch (polar residues) spans 421 to 435; the sequence is TPSNRGPRNQFITHD.

In terms of assembly, self-associates; dimerization and trimerization are promoted by lymphotoxin (LTA(1)-LTB(2)). Associates with TRAF3. Associates with TRAF4. Associates with TRAF5. Interacts with Aedes aegypti lymphotoxin beta receptor inhibitor; the interaction reduces dimerization and trimerization of LTBR induced by lymphotoxin (LTA(1)-LTB(2)). (Microbial infection) Interacts with HCV core protein.

It localises to the membrane. Its function is as follows. Receptor for the heterotrimeric lymphotoxin containing LTA and LTB, and for TNFS14/LIGHT. Activates NF-kappa-B signaling pathway upon stimulation with lymphotoxin (LTA(1)-LTB(2)). Promotes apoptosis via TRAF3 and TRAF5. May play a role in the development of lymphoid organs. This chain is Tumor necrosis factor receptor superfamily member 3 (LTBR), found in Homo sapiens (Human).